Here is a 212-residue protein sequence, read N- to C-terminus: Ras-related protein Rab-15 (212 aa).

GTP-binding residues include S17, G18, V19, G20, K21, T22, C23, S35, S39, and T40. T22 contacts Mg(2+). 2 consecutive short sequence motifs (switch) follow at residues N31–F45 and D63–R80. Residues T40 and D63 each contribute to the Mg(2+) site. 6 residues coordinate GTP: G66, N121, K122, D124, S151, and A152. 2 S-geranylgeranyl cysteine lipidation sites follow: C210 and C212. C212 carries the cysteine methyl ester modification.

This sequence belongs to the small GTPase superfamily. Rab family. The GTP bound form of RAB15 interacts with REP15. Interacts (GTP-bound form) with MICAL1, MICAL3, MICALCL, EHBP1 and EHBP1L1. It depends on Mg(2+) as a cofactor. As to expression, expressed predominantly in neural tissues.

Its subcellular location is the cell membrane. The catalysed reaction is GTP + H2O = GDP + phosphate + H(+). Regulated by guanine nucleotide exchange factors (GEFs) which promote the exchange of bound GDP for free GTP. Regulated by GTPase activating proteins (GAPs) which increase the GTP hydrolysis activity. Inhibited by GDP dissociation inhibitors (GDIs). The small GTPases Rab are key regulators of intracellular membrane trafficking, from the formation of transport vesicles to their fusion with membranes. Rabs cycle between an inactive GDP-bound form and an active GTP-bound form that is able to recruit to membranes different sets of downstream effectors directly responsible for vesicle formation, movement, tethering and fusion. RAB15 may act in concert with RAB3A in regulating aspects of synaptic vesicle membrane flow within the nerve terminal. This is Ras-related protein Rab-15 from Rattus norvegicus (Rat).